The chain runs to 216 residues: Redox-sensing transcriptional repressor Rex (216 aa).

Residues Gln-20–Phe-59 constitute a DNA-binding region (H-T-H motif). Gly-94–Gly-99 is an NAD(+) binding site.

Belongs to the transcriptional regulatory Rex family. In terms of assembly, homodimer.

Its subcellular location is the cytoplasm. Its function is as follows. Modulates transcription in response to changes in cellular NADH/NAD(+) redox state. The polypeptide is Redox-sensing transcriptional repressor Rex (Lactococcus lactis subsp. lactis (strain IL1403) (Streptococcus lactis)).